The following is a 1242-amino-acid chain: Protein STU1 (1242 aa).

Low complexity-rich tracts occupy residues 138–156 (LNSS…TATK) and 548–567 (AASP…PSSA). 6 disordered regions span residues 138 to 161 (LNSS…KPHE), 538 to 612 (KQLE…NPVF), 637 to 711 (HVET…LGLG), 748 to 839 (AEHE…NGNI), 853 to 884 (AFQT…RPEA), and 1077 to 1111 (HPAP…EKRT). Residues 574 to 593 (KKMDLKAMLAERRRAVKEAG) are compositionally biased toward basic and acidic residues. 2 stretches are compositionally biased toward low complexity: residues 640–660 (TSSP…RIRP) and 701–711 (SPSLSPSLGLG). Over residues 748 to 767 (AEHEVDELTLKEGQKTRDDG) the composition is skewed to basic and acidic residues. Composition is skewed to polar residues over residues 802–815 (QQGN…SGRV), 824–837 (ATGT…SRNG), and 856–871 (TPLN…SSAI). A compositionally biased stretch (low complexity) spans 1082 to 1104 (SSSADNSDPMTSALSQLSLSSSK).

This sequence belongs to the CLASP family. Interacts with microtubules.

The protein resides in the cytoplasm. It is found in the cytoskeleton. The protein localises to the nucleus. Its subcellular location is the spindle. Microtubule binding protein that promotes the stabilization of dynamic microtubules. Required for mitotic spindle formation. In Cryptococcus neoformans var. neoformans serotype D (strain B-3501A) (Filobasidiella neoformans), this protein is Protein STU1 (STU1).